The chain runs to 510 residues: 2,3-bisphosphoglycerate-independent phosphoglycerate mutase (510 aa).

Mn(2+)-binding residues include aspartate 13 and serine 63. The active-site Phosphoserine intermediate is the serine 63. Substrate is bound by residues histidine 124, 154-155, arginine 186, arginine 192, 262-265, and lysine 334; these read RD and RADR. Mn(2+) contacts are provided by aspartate 401, histidine 405, aspartate 442, histidine 443, and histidine 461.

It belongs to the BPG-independent phosphoglycerate mutase family. As to quaternary structure, monomer. Mn(2+) serves as cofactor.

The catalysed reaction is (2R)-2-phosphoglycerate = (2R)-3-phosphoglycerate. It functions in the pathway carbohydrate degradation; glycolysis; pyruvate from D-glyceraldehyde 3-phosphate: step 3/5. Functionally, catalyzes the interconversion of 2-phosphoglycerate and 3-phosphoglycerate. This Vibrio atlanticus (strain LGP32) (Vibrio splendidus (strain Mel32)) protein is 2,3-bisphosphoglycerate-independent phosphoglycerate mutase.